Consider the following 135-residue polypeptide: Small ribosomal subunit protein uS11 (135 aa).

The tract at residues 1–20 (MGRQRQQRSRGSRSRRRVRK) is disordered.

This sequence belongs to the universal ribosomal protein uS11 family. Part of the 30S ribosomal subunit. Interacts with proteins S7 and S18. Binds to IF-3.

In terms of biological role, located on the platform of the 30S subunit, it bridges several disparate RNA helices of the 16S rRNA. Forms part of the Shine-Dalgarno cleft in the 70S ribosome. This chain is Small ribosomal subunit protein uS11, found in Rubrobacter xylanophilus (strain DSM 9941 / JCM 11954 / NBRC 16129 / PRD-1).